Here is a 355-residue protein sequence, read N- to C-terminus: 6-aminohexanoate-oligomer endohydrolase (355 aa).

Thr-267 acts as the Nucleophile in catalysis.

Belongs to the peptidase S58 family. In terms of assembly, heterotetramer composed of 4 alpha/beta heterodimers. Exists at the monomer/dimer/trimer equilibrium in aqueous solution. In terms of processing, expressed as an inactive precursor that is cleaved autocatalytically at Asn266/Thr267 to generate an active enzyme composed of an alpha subunit and a beta subunit.

It catalyses the reaction [N-(6-aminohexanoyl)]n + H2O = [N-(6-aminohexanoyl)]n-x + [N-(6-aminohexanoyl)]x.. It functions in the pathway xenobiotic degradation; nylon-6 oligomer degradation. In terms of biological role, involved in the degradation of nylon-6 oligomers. Degrades cyclic and linear oligomers of 6-aminohexanoate (Ahx) with a degree of polymerization greater than three by an endo-type mode. Cannot use Ahx cyclic dimer or the Ahx linear dimer. This Paenarthrobacter ureafaciens protein is 6-aminohexanoate-oligomer endohydrolase.